A 704-amino-acid chain; its full sequence is Probable ferric reduction oxidase 1 (704 aa).

At 1 to 16 the chain is on the cytoplasmic side; that stretch reads MGVGEMNKEVIDKVIK. The helical transmembrane segment at 17–36 threads the bilayer; sequence FLMMVILMGTIVIWIMMPTS. The Lumenal segment spans residues 37 to 62; that stretch reads TYKEIWLTSMRAKLGKSIYYGRPGVN. Residues 63–81 traverse the membrane as a helical segment; sequence LLVYMFPMILLAFLGCIYL. The Cytoplasmic portion of the chain corresponds to 82 to 115; sequence HLKKSTTVNQFNSGVEKKRAKFGALRRPMLVNGP. Residues 116 to 139 form a helical membrane-spanning segment; sequence LGIVTVTEVMFLTMFMALLLWSLA. At 140–207 the chain is on the lumenal side; that stretch reads NYMYRTFVNV…VGLTSESSIK (68 aa). The Ferric oxidoreductase domain occupies 174–294; the sequence is GIVGNICLAF…YLYIVFMLFF (121 aa). Residues 208 to 231 traverse the membrane as a helical segment; sequence YHIWLGHLVMIIFTSHGLCYFIYW. Heme is bound by residues His-209 and His-223. Topologically, residues 232–282 are cytoplasmic; that stretch reads ISKNQLVSKMLEWDRTAVSNLAGEIALVAGLMMWVTTYPKIRRRLFEVFFY. A helical membrane pass occupies residues 283–307; the sequence is SHYLYIVFMLFFVFHVGISHALIPL. Heme contacts are provided by His-284 and His-297. Topologically, residues 308-329 are lumenal; sequence PGFYIFLVDRFLRFLQSRNNVK. An FAD-binding FR-type domain is found at 323–430; that stretch reads QSRNNVKLVS…EGPYGPSSTD (108 aa). The chain crosses the membrane as a helical span at residues 330 to 350; it reads LVSARVLPCDTVELNFSKNPM. Residues 351-550 lie on the Cytoplasmic side of the membrane; that stretch reads LMYSPTSTMF…PISPILGPNS (200 aa). 372 to 375 is an FAD binding site; the sequence is HPFT. 422–425 is a binding site for NAD(+); it reads GPYG. The chain crosses the membrane as a helical span at residues 551–573; it reads WLCLAAILSSSFMIFIVIIAIIT. Residues 574–592 are Lumenal-facing; it reads RYHIHPIDQNSEKYTWAYK. Residues 593–614 traverse the membrane as a helical segment; that stretch reads SLIYLVSISITVVTTSTAAMLW. Topologically, residues 615-704 are cytoplasmic; sequence NKKKYYAKND…LHFESISFSW (90 aa).

This sequence belongs to the ferric reductase (FRE) family. The cofactor is FAD. In terms of tissue distribution, expressed in siliques. Detected in roots.

The protein resides in the membrane. It catalyses the reaction 2 a Fe(II)-siderophore + NAD(+) + H(+) = 2 a Fe(III)-siderophore + NADH. Ferric chelate reductase involved in iron reduction in roots. May participate in the transport of electrons to a Fe(3+) ion via FAD and heme intermediates. This Arabidopsis thaliana (Mouse-ear cress) protein is Probable ferric reduction oxidase 1 (FRO1).